A 206-amino-acid polypeptide reads, in one-letter code: Dephospho-CoA kinase (206 aa).

Residues 4-200 enclose the DPCK domain; it reads TVALTGGIGS…ASYLKLASQF (197 aa). 12-17 is an ATP binding site; that stretch reads GSGKST.

This sequence belongs to the CoaE family.

The protein resides in the cytoplasm. It catalyses the reaction 3'-dephospho-CoA + ATP = ADP + CoA + H(+). It functions in the pathway cofactor biosynthesis; coenzyme A biosynthesis; CoA from (R)-pantothenate: step 5/5. Functionally, catalyzes the phosphorylation of the 3'-hydroxyl group of dephosphocoenzyme A to form coenzyme A. This is Dephospho-CoA kinase from Salmonella paratyphi A (strain ATCC 9150 / SARB42).